We begin with the raw amino-acid sequence, 134 residues long: Putative nickel-responsive regulator (134 aa).

Residues H78, H89, H91, and C97 each contribute to the Ni(2+) site.

It belongs to the transcriptional regulatory CopG/NikR family. The cofactor is Ni(2+).

Its function is as follows. Transcriptional regulator. The protein is Putative nickel-responsive regulator of Chlorobium phaeobacteroides (strain DSM 266 / SMG 266 / 2430).